The primary structure comprises 335 residues: Mesoderm-specific transcript homolog protein (335 aa).

3 consecutive transmembrane segments (helical) span residues 13-33 (WWVQ…HIPP), 88-108 (IWEG…LGFG), and 266-286 (VGAL…LDPV). The AB hydrolase-1 domain occupies 71 to 310 (IVVLLHGFPT…PRSTVSILDD (240 aa)). An RVIALD motif is present at residues 98–103 (RVIALD).

Belongs to the AB hydrolase superfamily. No detectable transcripts during preimplantation development. Isoform 1 was not detected in either in vitro-matured oocytes (IVF) or parthenogenetically activated (PA) blastocyst. Isoform 2 was expressed in IVF and PA blastocysts.

It localises to the endoplasmic reticulum membrane. The polypeptide is Mesoderm-specific transcript homolog protein (MEST) (Bos taurus (Bovine)).